The chain runs to 402 residues: Endoglucanase 1 (402 aa).

Gln1 is modified (pyrrolidone carboxylic acid). Cystine bridges form between Cys18–Cys24, Cys51–Cys73, and Cys63–Cys69. Residue Asn89 is glycosylated (N-linked (GlcNAc...) asparagine). 6 cysteine pairs are disulfide-bonded: Cys140–Cys365, Cys172–Cys195, Cys176–Cys194, Cys215–Cys234, Cys223–Cys228, and Cys239–Cys315. Glu197 acts as the Nucleophile in catalysis. The active-site Proton donor is the Glu202. Residue Asn247 is glycosylated (N-linked (GlcNAc...) asparagine).

This sequence belongs to the glycosyl hydrolase 7 (cellulase C) family. Monomer.

The protein localises to the secreted. The enzyme catalyses Endohydrolysis of (1-&gt;4)-beta-D-glucosidic linkages in cellulose, lichenin and cereal beta-D-glucans.. The biological conversion of cellulose to glucose generally requires three types of hydrolytic enzymes: (1) Endoglucanases which cut internal beta-1,4-glucosidic bonds; (2) Exocellobiohydrolases that cut the disaccharide cellobiose from the non-reducing end of the cellulose polymer chain; (3) Beta-1,4-glucosidases which hydrolyze the cellobiose and other short cello-oligosaccharides to glucose. This Humicola insolens (Soft-rot fungus) protein is Endoglucanase 1 (CEL7B).